A 144-amino-acid polypeptide reads, in one-letter code: Large ribosomal subunit protein uL15 (144 aa).

Residues 1-49 form a disordered region; it reads MRLNTLSPAAGSKSAPKRVGRGIGSGLGKTAGRGHKGQKSRSGGGVRVG. A compositionally biased stretch (gly residues) spans 21–31; sequence RGIGSGLGKTA.

Belongs to the universal ribosomal protein uL15 family. Part of the 50S ribosomal subunit.

Its function is as follows. Binds to the 23S rRNA. This chain is Large ribosomal subunit protein uL15, found in Shewanella denitrificans (strain OS217 / ATCC BAA-1090 / DSM 15013).